A 297-amino-acid chain; its full sequence is GTP cyclohydrolase FolE2 (297 aa).

The protein belongs to the GTP cyclohydrolase IV family.

The catalysed reaction is GTP + H2O = 7,8-dihydroneopterin 3'-triphosphate + formate + H(+). The protein operates within cofactor biosynthesis; 7,8-dihydroneopterin triphosphate biosynthesis; 7,8-dihydroneopterin triphosphate from GTP: step 1/1. Functionally, converts GTP to 7,8-dihydroneopterin triphosphate. In Pseudomonas fluorescens (strain ATCC BAA-477 / NRRL B-23932 / Pf-5), this protein is GTP cyclohydrolase FolE2.